Reading from the N-terminus, the 1012-residue chain is Structural polyprotein (1012 aa).

Residue aspartate 30 coordinates a divalent metal cation. The 243-residue stretch at alanine 513–alanine 755 folds into the Peptidase S50 domain. Catalysis depends on serine 652, which acts as the Nucleophile. The active site involves lysine 692. The tract at residues methionine 970–glutamate 1012 is disordered. Basic residues predominate over residues arginine 975–proline 986. Residues isoleucine 1003–glutamate 1012 are interaction with VP1 protein.

In terms of assembly, homotrimer. A central divalent metal stabilizes the VP2 trimer. Interacts with host ITGA4/ITGB1. As to quaternary structure, homodimer. Interacts (via C-terminus) with VP1 in the cytoplasm. Interacts with VP2. In terms of processing, specific enzymatic cleavages yield mature proteins. The capsid assembly seems to be regulated by polyprotein processing. The protease VP4 cleaves itself off the polyprotein, thus releasing pre-VP2 and VP3 within the infected cell. During capsid assembly, the C-terminus of pre-VP2 is further processed by VP4, giving rise to VP2, the external capsid protein and three small peptides that all stay closely associated with the capsid.

It is found in the virion. Its subcellular location is the host cytoplasm. Functionally, capsid protein VP2 self assembles to form an icosahedral capsid with a T=13 symmetry, about 70 nm in diameter, and consisting of 260 VP2 trimers. The capsid encapsulates the genomic dsRNA. VP2 is also involved in attachment and entry into the host cell by interacting with host ITGA4/ITGB1. The precursor of VP2 plays an important role in capsid assembly. First, pre-VP2 and VP2 oligomers assemble to form a procapsid. Then, the pre-VP2 intermediates may be processed into VP2 proteins by proteolytic cleavage mediated by VP4 to obtain the mature virion. The final capsid is composed of pentamers and hexamers but VP2 has a natural tendency to assemble into all-pentameric structures. Therefore pre-VP2 may be required to allow formation of the hexameric structures. In terms of biological role, protease VP4 is a serine protease that cleaves the polyprotein into its final products. Pre-VP2 is first partially cleaved, and may be completely processed by VP4 upon capsid maturation. Its function is as follows. Capsid protein VP3 plays a key role in virion assembly by providing a scaffold for the capsid made of VP2. May self-assemble to form a T=4-like icosahedral inner-capsid composed of at least 180 trimers. Plays a role in genomic RNA packaging by recruiting VP1 into the capsid and interacting with the dsRNA genome segments to form a ribonucleoprotein complex. Additionally, the interaction of the VP3 C-terminal tail with VP1 removes the inherent structural blockade of the polymerase active site. Thus, VP3 can also function as a transcriptional activator. Functionally, structural peptide 1 is a small peptide derived from pre-VP2 C-terminus. It destabilizes and perforates cell membranes, suggesting a role during entry. Structural peptide 2 is a small peptide derived from pVP2 C-terminus. It is not essential for the virus viability, but viral growth is affected when missing. In terms of biological role, structural peptide 3 is a small peptide derived from pVP2 C-terminus. It is not essential for the virus viability, but viral growth is affected when missing. Its function is as follows. Structural peptide 4 is a small peptide derived from pVP2 C-terminus. It is essential for the virus viability. The sequence is that of Structural polyprotein from Avian infectious bursal disease virus (strain Chicken/Cuba/Soroa/1998) (IBDV).